The chain runs to 202 residues: Ras-related protein RIC1 (202 aa).

GTP contacts are provided by residues 15-23 (GDSGVGKSC), 33-40 (YLESYIST), 63-67 (DTAGQ), 121-124 (NKCD), and 151-153 (SAK). The Effector region signature appears at 37-45 (YISTIGVDF). The span at 174 to 185 (ASQPATNASKPA) shows a compositional bias: polar residues. The segment at 174 to 202 (ASQPATNASKPATVQMRGQPVAQQSSCCS) is disordered. Residues C200 and C201 are each lipidated (S-geranylgeranyl cysteine).

This sequence belongs to the small GTPase superfamily. Rab family.

Its subcellular location is the cell membrane. Possesses GTPase activity. The polypeptide is Ras-related protein RIC1 (RIC1) (Oryza sativa subsp. japonica (Rice)).